The primary structure comprises 427 residues: Trigger factor (427 aa).

One can recognise a PPIase FKBP-type domain in the interval 163 to 248; the sequence is GDTVVIDFVG…VNEVKAKELP (86 aa).

Belongs to the FKBP-type PPIase family. Tig subfamily.

It localises to the cytoplasm. The enzyme catalyses [protein]-peptidylproline (omega=180) = [protein]-peptidylproline (omega=0). Its function is as follows. Involved in protein export. Acts as a chaperone by maintaining the newly synthesized protein in an open conformation. Functions as a peptidyl-prolyl cis-trans isomerase. The chain is Trigger factor from Lactococcus lactis subsp. cremoris (strain SK11).